A 301-amino-acid chain; its full sequence is MKIKLILVLIVFLTIVNVNNSIDLCLSNPKKALVNQACKYSTDCEYPLFCGSGNGYGKNATCSKNIETGGSCESNNQCTPCNVCFNAKCKVKLYLGDACDENKSYCSSSVCIKGKCSIQGDVCTANNQCKFNNYCKSGKCVPLEKEGSSCDKDSSCSLTNACVGGKCVTKYQKPLGAVCNSSNECQVFSGHVCGANGKCSVYNQLLSKCKENSDCGPNGMCMCKSETENVCVDLSVGALKNDKCPSLLSSFSSCMTRERCTENTPTGCPKCYPIFMCYQYSCFYMNQFIRSTQNYYKSFCS.

An N-terminal signal peptide occupies residues 1–21; sequence MKIKLILVLIVFLTIVNVNNS. N-linked (GlcNAc...) asparagine glycans are attached at residues asparagine 19, asparagine 59, asparagine 102, and asparagine 180.

It localises to the secreted. This is an uncharacterized protein from Dictyostelium discoideum (Social amoeba).